Reading from the N-terminus, the 451-residue chain is Probable plasmid replicative DNA helicase (451 aa).

Positions 194–451 constitute an SF4 helicase domain; sequence QNSFFDAFPT…SKFSAIKKVW (258 aa). 225-232 is a binding site for ATP; it reads ARPSIGKT.

This sequence belongs to the helicase family. DnaB subfamily. In terms of assembly, homohexamer.

The enzyme catalyses Couples ATP hydrolysis with the unwinding of duplex DNA at the replication fork by translocating in the 5'-3' direction. This creates two antiparallel DNA single strands (ssDNA). The leading ssDNA polymer is the template for DNA polymerase III holoenzyme which synthesizes a continuous strand.. The catalysed reaction is ATP + H2O = ADP + phosphate + H(+). Its function is as follows. A replicative DNA helicase, it participates in initiation and elongation during DNA replication. Travels ahead of the DNA replisome, separating dsDNA into templates for DNA synthesis. A processive ATP-dependent 5'-3' DNA helicase it has DNA-dependent ATPase activity. The plasmid this protein is encoded on is thought to be required for growth within mammalian cells. The polypeptide is Probable plasmid replicative DNA helicase (Chlamydia trachomatis serovar L2 (strain ATCC VR-902B / DSM 19102 / 434/Bu)).